The primary structure comprises 1012 residues: DNA polymerase gamma (1012 aa).

This sequence belongs to the DNA polymerase type-A family. Mg(2+) serves as cofactor.

The protein resides in the mitochondrion. The catalysed reaction is DNA(n) + a 2'-deoxyribonucleoside 5'-triphosphate = DNA(n+1) + diphosphate. Functionally, involved in the replication of mitochondrial DNA. The sequence is that of DNA polymerase gamma (MIP1) from Komagataella pastoris (Yeast).